A 156-amino-acid polypeptide reads, in one-letter code: CD-NTase-associated protein 8 (156 aa).

It belongs to the bacterial HORMA family. HORMA3 subfamily. As to quaternary structure, interacts with Cap7 (also called HORMA2) and CdnC; forms CdnD:Cap7:Cap8 (also called CdnD:HORMA2:HORMA3) complexes with stoichiometries of 1:1:1 and 2:1:1.

Its function is as follows. CBASS (cyclic oligonucleotide-based antiphage signaling system) provides immunity against bacteriophage. The CD-NTase protein synthesizes cyclic nucleotides in response to infection; these serve as specific second messenger signals. The signals activate a diverse range of effectors, leading to bacterial cell death and thus abortive phage infection. A type III-C(AAA) CBASS system. Functionally, a member of the CBASS system in this bacteria. It does not seem to bind a closure peptide, its exact function is unknown. The polypeptide is CD-NTase-associated protein 8 (Pseudomonas aeruginosa).